The primary structure comprises 350 residues: Small ribosomal subunit biogenesis GTPase RsgA (350 aa).

Over residues 1-17 (MSKNKLSKGQQRRVNAN) the composition is skewed to polar residues. The segment at 1 to 24 (MSKNKLSKGQQRRVNANHQRRLKT) is disordered. The CP-type G domain maps to 104-273 (TSVLTRPDFY…VIDSPGVREF (170 aa)). GTP contacts are provided by residues 160–163 (NKID) and 214–222 (GQSGVGKSS). Zn(2+) contacts are provided by Cys-297, Cys-302, His-304, and Cys-310.

The protein belongs to the TRAFAC class YlqF/YawG GTPase family. RsgA subfamily. Monomer. Associates with 30S ribosomal subunit, binds 16S rRNA. The cofactor is Zn(2+).

The protein resides in the cytoplasm. Its function is as follows. One of several proteins that assist in the late maturation steps of the functional core of the 30S ribosomal subunit. Helps release RbfA from mature subunits. May play a role in the assembly of ribosomal proteins into the subunit. Circularly permuted GTPase that catalyzes slow GTP hydrolysis, GTPase activity is stimulated by the 30S ribosomal subunit. This is Small ribosomal subunit biogenesis GTPase RsgA from Salmonella schwarzengrund (strain CVM19633).